Reading from the N-terminus, the 395-residue chain is Terminal nucleotidyltransferase 5B (395 aa).

This sequence belongs to the TENT family.

The protein resides in the cytoplasm. The protein localises to the nucleus. It carries out the reaction RNA(n) + ATP = RNA(n)-3'-adenine ribonucleotide + diphosphate. Functionally, catalyzes the transfer of one adenosine molecule from an ATP to an mRNA poly(A) tail bearing a 3'-OH terminal group in an ATP hydrolysis-dependent manner and participates in cytoplasmic polyadenylation. May be involved in maintaining the translation efficiency of at least some genes through preventing degradation of their mRNAs. This Xenopus tropicalis (Western clawed frog) protein is Terminal nucleotidyltransferase 5B.